Here is a 130-residue protein sequence, read N- to C-terminus: Albumin-1 F (130 aa).

Residues 1-26 form the signal peptide; that stretch reads MASVKLASLIVLFATLGMFLTKNVGA. Disulfide bonds link cysteine 29/cysteine 46, cysteine 33/cysteine 48, and cysteine 41/cysteine 58. 2 consecutive propeptides follow at residues 64 to 69 and 123 to 130; these read VFLRTN and LLKSVSTA.

Post-translationally, the C-terminal glycine may be removed from PA1b.

Functionally, PA1b binds to basic 7S globulin (BG) and stimulates its phosphorylation activity. Involved in the signal transduction system to regulate the growth and differentiation as a hormone peptide. Toxic to various insects through binding to a high affinity binding site in the insect gut. In Pisum sativum (Garden pea), this protein is Albumin-1 F.